A 622-amino-acid polypeptide reads, in one-letter code: Chaperone protein HscA homolog (622 aa).

This sequence belongs to the heat shock protein 70 family.

Functionally, chaperone involved in the maturation of iron-sulfur cluster-containing proteins. Has a low intrinsic ATPase activity which is markedly stimulated by HscB. This Burkholderia cenocepacia (strain HI2424) protein is Chaperone protein HscA homolog.